Here is an 870-residue protein sequence, read N- to C-terminus: DNA mismatch repair protein MutS (870 aa).

629 to 636 (GPNMGGKS) provides a ligand contact to ATP.

It belongs to the DNA mismatch repair MutS family.

This protein is involved in the repair of mismatches in DNA. It is possible that it carries out the mismatch recognition step. This protein has a weak ATPase activity. The chain is DNA mismatch repair protein MutS from Polaromonas naphthalenivorans (strain CJ2).